The sequence spans 489 residues: Glucose-6-phosphate 1-dehydrogenase (489 aa).

NADP(+) is bound by residues R50 and K151. 4 residues coordinate substrate: H181, K185, E219, and D238. The active-site Proton acceptor is the H243. Residues K341 and K346 each contribute to the substrate site.

It belongs to the glucose-6-phosphate dehydrogenase family. Homodimer.

It catalyses the reaction D-glucose 6-phosphate + NADP(+) = 6-phospho-D-glucono-1,5-lactone + NADPH + H(+). The protein operates within carbohydrate degradation; pentose phosphate pathway; D-ribulose 5-phosphate from D-glucose 6-phosphate (oxidative stage): step 1/3. In terms of biological role, catalyzes the oxidation of glucose 6-phosphate to 6-phosphogluconolactone. The polypeptide is Glucose-6-phosphate 1-dehydrogenase (Gluconobacter oxydans (strain 621H) (Gluconobacter suboxydans)).